The primary structure comprises 157 residues: Transcriptional repressor NrdR (157 aa).

The segment at 3–34 is a zinc-finger region; the sequence is CPFCRHPDSRVVDSRTSDDGLSIRRRRQCPEC. The ATP-cone domain maps to 46–136; that stretch reads LSVIKRNGVV…VYQGFDSLDD (91 aa).

The protein belongs to the NrdR family. Requires Zn(2+) as cofactor.

Its function is as follows. Negatively regulates transcription of bacterial ribonucleotide reductase nrd genes and operons by binding to NrdR-boxes. The chain is Transcriptional repressor NrdR from Clavibacter michiganensis subsp. michiganensis (strain NCPPB 382).